We begin with the raw amino-acid sequence, 69 residues long: Small, acid-soluble spore protein I (69 aa).

It belongs to the SspI family.

The protein localises to the spore core. The polypeptide is Small, acid-soluble spore protein I (Bacillus anthracis (strain A0248)).